The primary structure comprises 89 residues: Small ribosomal subunit protein uS19 (89 aa).

It belongs to the universal ribosomal protein uS19 family.

Functionally, protein S19 forms a complex with S13 that binds strongly to the 16S ribosomal RNA. In Bacteroides thetaiotaomicron (strain ATCC 29148 / DSM 2079 / JCM 5827 / CCUG 10774 / NCTC 10582 / VPI-5482 / E50), this protein is Small ribosomal subunit protein uS19.